The sequence spans 290 residues: ATP synthase gamma chain (290 aa).

The protein belongs to the ATPase gamma chain family. In terms of assembly, F-type ATPases have 2 components, CF(1) - the catalytic core - and CF(0) - the membrane proton channel. CF(1) has five subunits: alpha(3), beta(3), gamma(1), delta(1), epsilon(1). CF(0) has three main subunits: a, b and c.

It is found in the cell inner membrane. Its function is as follows. Produces ATP from ADP in the presence of a proton gradient across the membrane. The gamma chain is believed to be important in regulating ATPase activity and the flow of protons through the CF(0) complex. This is ATP synthase gamma chain from Bacteroides fragilis (strain ATCC 25285 / DSM 2151 / CCUG 4856 / JCM 11019 / LMG 10263 / NCTC 9343 / Onslow / VPI 2553 / EN-2).